Here is a 156-residue protein sequence, read N- to C-terminus: Nucleoredoxin-like protein 2 (156 aa).

In terms of domain architecture, Thioredoxin spans 9 to 147 (RLVTREGTVV…LACFQNWVEA (139 aa)).

This sequence belongs to the nucleoredoxin family. As to expression, both isoforms are expressed in retina, in the photoreceptor layer, and throughout the olfactory sensory neuron layer of the nasal epithelium, in neurons. Also expressed at low levels in brain and testis.

May be involved in the maintenance of both the function and the viability of sensory neurons, including photoreceptors and olfactory neurons. In the retina, isoform 1 may be required for rod function and isoform 2 for cone viability and function. This is Nucleoredoxin-like protein 2 (Nxnl2) from Mus musculus (Mouse).